Consider the following 955-residue polypeptide: Kinesin heavy chain isoform 5C (955 aa).

In terms of domain architecture, Kinesin motor spans 8–327; that stretch reads SIKVMCRFRP…LMFGQRAKTI (320 aa). The ATP site is built by Q87, S89, S90, G91, K92, T93, H94, and K99. The segment at 174–315 is microtubule-binding; it reads VSSPEEVMDV…PSVFNEAETK (142 aa). Residues 332 to 366 adopt a coiled-coil conformation; the sequence is SVNLELTAEEWKKKYEKEKEKNKALKSVIQHLEVE. A Phosphothreonine modification is found at T403. Coiled-coil stretches lie at residues 413 to 538 and 590 to 913; these read KEKY…LQEL and ISKM…KNMA. The segment at 859–955 is globular; sequence CELPKLEKRL…GSSNSTHYQK (97 aa). The tract at residues 909–955 is disordered; that stretch reads AKNMARRAHSAQIAKPIRPGHYPASSPTAVHAVRGGGGSSNSTHYQK.

It belongs to the TRAFAC class myosin-kinesin ATPase superfamily. Kinesin family. Kinesin subfamily. In terms of assembly, oligomer composed of two heavy chains and two light chains. Interacts with GRIP1. Interacts with TRAK1. Interacts with ZFYVE27. Interacts with KLC3.

The protein resides in the cytoplasm. It localises to the cytoskeleton. The protein localises to the cell projection. Its subcellular location is the dendrite. It catalyses the reaction ATP + H2O = ADP + phosphate + H(+). Microtubule-associated force-producing protein that may play a role in organelle transport. Has ATPase activity. Involved in synaptic transmission. Mediates dendritic trafficking of mRNAs. Required for anterograde axonal transportation of MAPK8IP3/JIP3 which is essential for MAPK8IP3/JIP3 function in axon elongation. The protein is Kinesin heavy chain isoform 5C (Kif5c) of Rattus norvegicus (Rat).